The following is a 96-amino-acid chain: Growth-regulated alpha protein (96 aa).

The first 24 residues, 1 to 24, serve as a signal peptide directing secretion; the sequence is MIPATRSLLCAALLLLATSRLATG. Cystine bridges form between Cys33–Cys59 and Cys35–Cys75.

This sequence belongs to the intercrine alpha (chemokine CxC) family. Post-translationally, the N-terminal processed form KC(5-72) is produced by proteolytic cleavage after secretion from bone marrow stromal cells.

The protein resides in the secreted. In terms of biological role, has chemotactic activity for neutrophils. Contributes to neutrophil activation during inflammation. Hematoregulatory chemokine, which, in vitro, suppresses hematopoietic progenitor cell proliferation. KC(5-72) shows a highly enhanced hematopoietic activity. The protein is Growth-regulated alpha protein (Cxcl1) of Mus musculus (Mouse).